The primary structure comprises 167 residues: MANPIEEILGTAAAIAKGMGITFKEMMGPTVTDDYPDAPPKFEERFRGVHVLQRDVNGMEKCVACFLCAAACPSNCIYIEAAENTDKIRMSGGERYAKVYNIDYNRCIFCGYCVEACPTDAITHGHGFEAASYNTSTLVKRKEDMLVPVPPGAKPPSMADEVPAGAH.

2 consecutive 4Fe-4S ferredoxin-type domains span residues 52-82 (LQRD…IEAA) and 98-127 (KVYN…HGHG). [4Fe-4S] cluster is bound by residues cysteine 62, cysteine 65, cysteine 68, cysteine 72, cysteine 107, cysteine 110, cysteine 113, and cysteine 117. Residues 148-167 (PVPPGAKPPSMADEVPAGAH) are disordered.

Belongs to the complex I 23 kDa subunit family. As to quaternary structure, NDH-1 is composed of 14 different subunits. Subunits NuoA, H, J, K, L, M, N constitute the membrane sector of the complex. Requires [4Fe-4S] cluster as cofactor.

Its subcellular location is the cell inner membrane. The catalysed reaction is a quinone + NADH + 5 H(+)(in) = a quinol + NAD(+) + 4 H(+)(out). Its function is as follows. NDH-1 shuttles electrons from NADH, via FMN and iron-sulfur (Fe-S) centers, to quinones in the respiratory chain. The immediate electron acceptor for the enzyme in this species is believed to be ubiquinone. Couples the redox reaction to proton translocation (for every two electrons transferred, four hydrogen ions are translocated across the cytoplasmic membrane), and thus conserves the redox energy in a proton gradient. This is NADH-quinone oxidoreductase subunit I 1 from Solibacter usitatus (strain Ellin6076).